Reading from the N-terminus, the 735-residue chain is Phosphoribosylformylglycinamidine synthase subunit PurL (735 aa).

The active site involves His-49. Tyr-52 and Lys-91 together coordinate ATP. Glu-93 is a Mg(2+) binding site. Substrate-binding positions include 94-97 (SHNH) and Arg-116. The Proton acceptor role is filled by His-95. Asp-117 serves as a coordination point for Mg(2+). Gln-240 contacts substrate. Asp-268 is a binding site for Mg(2+). Residue 312–314 (ESQ) coordinates substrate. Residues Asp-493 and Gly-530 each coordinate ATP. Asn-531 is a Mg(2+) binding site. Substrate is bound at residue Ser-533.

The protein belongs to the FGAMS family. Monomer. Part of the FGAM synthase complex composed of 1 PurL, 1 PurQ and 2 PurS subunits.

The protein resides in the cytoplasm. It catalyses the reaction N(2)-formyl-N(1)-(5-phospho-beta-D-ribosyl)glycinamide + L-glutamine + ATP + H2O = 2-formamido-N(1)-(5-O-phospho-beta-D-ribosyl)acetamidine + L-glutamate + ADP + phosphate + H(+). It functions in the pathway purine metabolism; IMP biosynthesis via de novo pathway; 5-amino-1-(5-phospho-D-ribosyl)imidazole from N(2)-formyl-N(1)-(5-phospho-D-ribosyl)glycinamide: step 1/2. Part of the phosphoribosylformylglycinamidine synthase complex involved in the purines biosynthetic pathway. Catalyzes the ATP-dependent conversion of formylglycinamide ribonucleotide (FGAR) and glutamine to yield formylglycinamidine ribonucleotide (FGAM) and glutamate. The FGAM synthase complex is composed of three subunits. PurQ produces an ammonia molecule by converting glutamine to glutamate. PurL transfers the ammonia molecule to FGAR to form FGAM in an ATP-dependent manner. PurS interacts with PurQ and PurL and is thought to assist in the transfer of the ammonia molecule from PurQ to PurL. The polypeptide is Phosphoribosylformylglycinamidine synthase subunit PurL (Methylocella silvestris (strain DSM 15510 / CIP 108128 / LMG 27833 / NCIMB 13906 / BL2)).